The primary structure comprises 288 residues: Proteasome subunit beta (288 aa).

A propeptide spans 1–60 (MESNADWGSRGGLPQAFLTPGISSFSEFLKGFAPEYLPSGRPLPGGLGSASAAGDIAPHG) (removed in mature form; by autocatalysis). The active-site Nucleophile is the Thr61.

This sequence belongs to the peptidase T1B family. In terms of assembly, the 20S proteasome core is composed of 14 alpha and 14 beta subunits that assemble into four stacked heptameric rings, resulting in a barrel-shaped structure. The two inner rings, each composed of seven catalytic beta subunits, are sandwiched by two outer rings, each composed of seven alpha subunits. The catalytic chamber with the active sites is on the inside of the barrel. Has a gated structure, the ends of the cylinder being occluded by the N-termini of the alpha-subunits. Is capped by the proteasome-associated ATPase, ARC.

Its subcellular location is the cytoplasm. It carries out the reaction Cleavage of peptide bonds with very broad specificity.. It participates in protein degradation; proteasomal Pup-dependent pathway. The formation of the proteasomal ATPase ARC-20S proteasome complex, likely via the docking of the C-termini of ARC into the intersubunit pockets in the alpha-rings, may trigger opening of the gate for substrate entry. Interconversion between the open-gate and close-gate conformations leads to a dynamic regulation of the 20S proteasome proteolysis activity. Functionally, component of the proteasome core, a large protease complex with broad specificity involved in protein degradation. This is Proteasome subunit beta from Catenulispora acidiphila (strain DSM 44928 / JCM 14897 / NBRC 102108 / NRRL B-24433 / ID139908).